The primary structure comprises 494 residues: Bifunctional protein HldE (494 aa).

The tract at residues 1 to 334 (MPTPILDFDA…RKILPHAYLA (334 aa)) is ribokinase. 209–212 (NRKE) serves as a coordination point for ATP. Residue Asp279 is part of the active site. The segment at 362 to 494 (FTNGCFDILH…LVHRARGGAK (133 aa)) is cytidylyltransferase.

In the N-terminal section; belongs to the carbohydrate kinase PfkB family. This sequence in the C-terminal section; belongs to the cytidylyltransferase family. As to quaternary structure, homodimer.

The catalysed reaction is D-glycero-beta-D-manno-heptose 7-phosphate + ATP = D-glycero-beta-D-manno-heptose 1,7-bisphosphate + ADP + H(+). The enzyme catalyses D-glycero-beta-D-manno-heptose 1-phosphate + ATP + H(+) = ADP-D-glycero-beta-D-manno-heptose + diphosphate. Its pathway is nucleotide-sugar biosynthesis; ADP-L-glycero-beta-D-manno-heptose biosynthesis; ADP-L-glycero-beta-D-manno-heptose from D-glycero-beta-D-manno-heptose 7-phosphate: step 1/4. It participates in nucleotide-sugar biosynthesis; ADP-L-glycero-beta-D-manno-heptose biosynthesis; ADP-L-glycero-beta-D-manno-heptose from D-glycero-beta-D-manno-heptose 7-phosphate: step 3/4. Its function is as follows. Catalyzes the phosphorylation of D-glycero-D-manno-heptose 7-phosphate at the C-1 position to selectively form D-glycero-beta-D-manno-heptose-1,7-bisphosphate. Functionally, catalyzes the ADP transfer from ATP to D-glycero-beta-D-manno-heptose 1-phosphate, yielding ADP-D-glycero-beta-D-manno-heptose. In Bradyrhizobium diazoefficiens (strain JCM 10833 / BCRC 13528 / IAM 13628 / NBRC 14792 / USDA 110), this protein is Bifunctional protein HldE.